The following is a 103-amino-acid chain: Probable protease inhibitor Egf0.4b (103 aa).

The first 22 residues, 1 to 22, serve as a signal peptide directing secretion; it reads MMSEKFALVLLVACIAFIGIET. The TIL domain maps to 35–87; the sequence is CGENEAYDSMRRGCEERCDDHNPTFCFKFTTVCWCEKGYVRDKSDTCIKVEDC.

The protein belongs to the polydnaviridae EGF-like motif protein family.

The sequence is that of Probable protease inhibitor Egf0.4b (O11) from Microplitis demolitor bracovirus (isolate Webb) (MdBV).